The primary structure comprises 155 residues: Xanthine-guanine phosphoribosyltransferase (155 aa).

5-phospho-alpha-D-ribose 1-diphosphate-binding positions include 37–38, R69, and 90–98; these read RG and DDLVDTGGT. A GMP-binding site is contributed by R69. D91 is a binding site for Mg(2+). Residues D94 and I137 each coordinate guanine. D94 and I137 together coordinate xanthine. GMP contacts are provided by residues 94–98 and 136–137; these read DTGGT and WI.

Belongs to the purine/pyrimidine phosphoribosyltransferase family. XGPT subfamily. As to quaternary structure, homotetramer. Requires Mg(2+) as cofactor.

The protein localises to the cell inner membrane. The catalysed reaction is GMP + diphosphate = guanine + 5-phospho-alpha-D-ribose 1-diphosphate. The enzyme catalyses XMP + diphosphate = xanthine + 5-phospho-alpha-D-ribose 1-diphosphate. It carries out the reaction IMP + diphosphate = hypoxanthine + 5-phospho-alpha-D-ribose 1-diphosphate. The protein operates within purine metabolism; GMP biosynthesis via salvage pathway; GMP from guanine: step 1/1. It functions in the pathway purine metabolism; XMP biosynthesis via salvage pathway; XMP from xanthine: step 1/1. Its function is as follows. Purine salvage pathway enzyme that catalyzes the transfer of the ribosyl-5-phosphate group from 5-phospho-alpha-D-ribose 1-diphosphate (PRPP) to the N9 position of the 6-oxopurines guanine and xanthine to form the corresponding ribonucleotides GMP (guanosine 5'-monophosphate) and XMP (xanthosine 5'-monophosphate), with the release of PPi. To a lesser extent, also acts on hypoxanthine. The sequence is that of Xanthine-guanine phosphoribosyltransferase from Aeromonas salmonicida (strain A449).